Reading from the N-terminus, the 418-residue chain is Tektin-1 (418 aa).

Coiled-coil stretches lie at residues 21–84 (KNQY…LEQL), 268–308 (LKET…DQEG), and 336–383 (RLIK…ENTI). A disordered region spans residues 399-418 (PRDGDDHGEWAGGSHPEAVC).

The protein belongs to the tektin family. As to quaternary structure, microtubule inner protein component of sperm flagellar doublet microtubules. In terms of processing, ubiquitinated, leading to its degradation. Deubiquitinated by USP16, promoting its stability. As to expression, expressed in trachea multiciliated cells.

The protein resides in the cytoplasm. Its subcellular location is the cytoskeleton. It localises to the cilium axoneme. It is found in the flagellum axoneme. In terms of biological role, microtubule inner protein (MIP) part of the dynein-decorated doublet microtubules (DMTs) in cilia and flagellar axoneme. Forms filamentous polymers in the walls of ciliary and flagellar microtubules. This Bos taurus (Bovine) protein is Tektin-1 (TEKT1).